A 284-amino-acid polypeptide reads, in one-letter code: 2,3,4,5-tetrahydropyridine-2,6-dicarboxylate N-succinyltransferase (284 aa).

Residues R111 and D148 each contribute to the substrate site.

Belongs to the transferase hexapeptide repeat family. As to quaternary structure, homotrimer.

The protein resides in the cytoplasm. It carries out the reaction (S)-2,3,4,5-tetrahydrodipicolinate + succinyl-CoA + H2O = (S)-2-succinylamino-6-oxoheptanedioate + CoA. It participates in amino-acid biosynthesis; L-lysine biosynthesis via DAP pathway; LL-2,6-diaminopimelate from (S)-tetrahydrodipicolinate (succinylase route): step 1/3. This is 2,3,4,5-tetrahydropyridine-2,6-dicarboxylate N-succinyltransferase from Brucella suis (strain ATCC 23445 / NCTC 10510).